The chain runs to 223 residues: Uracil-DNA glycosylase (223 aa).

Catalysis depends on aspartate 61, which acts as the Proton acceptor.

Belongs to the uracil-DNA glycosylase (UDG) superfamily. UNG family.

Its subcellular location is the cytoplasm. It carries out the reaction Hydrolyzes single-stranded DNA or mismatched double-stranded DNA and polynucleotides, releasing free uracil.. Excises uracil residues from the DNA which can arise as a result of misincorporation of dUMP residues by DNA polymerase or due to deamination of cytosine. This chain is Uracil-DNA glycosylase, found in Histophilus somni (strain 129Pt) (Haemophilus somnus).